The chain runs to 478 residues: ATP synthase subunit beta (478 aa).

161–168 (GGAGVGKT) contacts ATP.

The protein belongs to the ATPase alpha/beta chains family. In terms of assembly, F-type ATPases have 2 components, CF(1) - the catalytic core - and CF(0) - the membrane proton channel. CF(1) has five subunits: alpha(3), beta(3), gamma(1), delta(1), epsilon(1). CF(0) has four main subunits: a(1), b(1), b'(1) and c(9-12).

Its subcellular location is the cell inner membrane. It carries out the reaction ATP + H2O + 4 H(+)(in) = ADP + phosphate + 5 H(+)(out). Its function is as follows. Produces ATP from ADP in the presence of a proton gradient across the membrane. The catalytic sites are hosted primarily by the beta subunits. The polypeptide is ATP synthase subunit beta (Gloeobacter violaceus (strain ATCC 29082 / PCC 7421)).